A 327-amino-acid polypeptide reads, in one-letter code: Inactive peptidyl-prolyl cis-trans isomerase FKBP6 (327 aa).

Residues 54 to 143 (DASVLVKYSG…LFEIELLDFL (90 aa)) enclose the PPIase FKBP-type domain. 3 TPR repeats span residues 171 to 204 (AATE…LRRR), 219 to 252 (LPVL…DQKN), and 253 to 286 (AKAL…QPFN).

The protein belongs to the FKBP6 family. In terms of assembly, interacts (via TPR repeats) with HSP90. Interacts with HSP72/HSPA2 and CLTC. Interacts with GAPDH; leading to inhibit GAPDH catalytic activity. In terms of tissue distribution, detected in all tissues examined, with higher expression in testis, heart, skeletal muscle, liver, and kidney.

The protein resides in the cytoplasm. It is found in the nucleus. Functionally, has an essential role in spermatogenesis. It is required to repress transposable elements and prevent their mobilization, which is essential for the germline integrity. Acts via the piRNA metabolic process, which mediates the repression of transposable elements during meiosis by forming complexes composed of piRNAs and Piwi proteins and govern the methylation and subsequent repression of transposons. Acts as a co-chaperone via its interaction with HSP90 and is required for the piRNA amplification process, the secondary piRNA biogenesis. May be required together with HSP90 in removal of 16 nucleotide ping-pong by-products from Piwi complexes, possibly facilitating turnover of Piwi complexes. The protein is Inactive peptidyl-prolyl cis-trans isomerase FKBP6 (FKBP6) of Homo sapiens (Human).